The sequence spans 323 residues: Trihelix transcription factor GT-3a (323 aa).

Residues 1-20 show a composition bias toward basic residues; sequence MDRRNPFQHHHHHHQLHHHL. The disordered stretch occupies residues 1–51; it reads MDRRNPFQHHHHHHQLHHHLIQQQQLPPPPLSTTATMDPGGGGGGGERIPQ. Positions 52 to 108 constitute a Myb-like domain; sequence WSIEETKELLAIREELDQTFMETKRNKLLWEVVAAKMADKGFVRSAEQCKSKWKNLV. Disordered stretches follow at residues 147 to 176, 190 to 220, and 269 to 297; these read EATE…EPNQ, KRET…GTKA, and ELEE…ARAQ. Positions 164–176 are enriched in acidic residues; the sequence is SDDEEEEVDEPNQ.

Homodimer. Heterodimer with GT-3B. Predominantly expressed in roots and flower buds.

The protein resides in the nucleus. Probable transcription factor that binds specifically to the core DNA sequence 5'-GTTAC-3'. This is Trihelix transcription factor GT-3a (GT-3A) from Arabidopsis thaliana (Mouse-ear cress).